We begin with the raw amino-acid sequence, 127 residues long: Large ribosomal subunit protein bL20 (127 aa).

It belongs to the bacterial ribosomal protein bL20 family.

In terms of biological role, binds directly to 23S ribosomal RNA and is necessary for the in vitro assembly process of the 50S ribosomal subunit. It is not involved in the protein synthesizing functions of that subunit. This is Large ribosomal subunit protein bL20 from Bifidobacterium animalis subsp. lactis (strain AD011).